A 252-amino-acid polypeptide reads, in one-letter code: Cyclic di-GMP binding protein VCA0042 (252 aa).

Residues 1 to 11 (MNSRPAEKIDN) show a composition bias toward basic and acidic residues. A disordered region spans residues 1–24 (MNSRPAEKIDNNDGQTETPRSKTV). The segment covering 12 to 24 (NDGQTETPRSKTV) has biased composition (polar residues). The PilZ domain maps to 134–233 (QLRKEPRFEL…EEGRNNAKNL (100 aa)).

This sequence belongs to the YcgR family. Dimer.

It is found in the bacterial flagellum basal body. May act as a flagellar brake, regulating swimming and swarming in a bis-(3'-5') cyclic diguanylic acid (c-di-GMP)-dependent manner. Increasing levels of c-di-GMP lead to decreased motility (Potential). Binds bis-(3'-5') cyclic diguanylic acid (c-di-GMP) with a dissociation constant of 170 nM in the presence of 10 mM KCl and with 100 nM in its absence. Binds 1 to 2 c-di-GMP per subunit. Only 1 c-di-GMP is seen in the wild-type crystal, while 2 are seen in the mutant. Depending on the concentration of K(+) stoichiometries of 1:1, 1.43:1 and 2:1 are determined by isothermal titration calorimetry. This is Cyclic di-GMP binding protein VCA0042 from Vibrio cholerae serotype O1 (strain ATCC 39315 / El Tor Inaba N16961).